Reading from the N-terminus, the 341-residue chain is HTH-type transcriptional repressor PurR (341 aa).

The HTH lacI-type domain occupies 2–56 (ATIKDVAKRANVSTTTVSHVINKTRFVAEETRNAVWTAIKELHYSPSAVARSLKV). The H-T-H motif DNA-binding region spans 4-23 (IKDVAKRANVSTTTVSHVIN). The DNA-binding element occupies 48 to 56 (SAVARSLKV). The hypoxanthine site is built by Y73, R190, T192, F221, and D275.

In terms of assembly, homodimer.

Its pathway is purine metabolism; purine nucleotide biosynthesis [regulation]. Its function is as follows. Is the main repressor of the genes involved in the de novo synthesis of purine nucleotides, regulating purB, purC, purEK, purF, purHD, purL, purMN and guaBA expression. PurR is allosterically activated to bind its cognate DNA by binding the purine corepressors, hypoxanthine or guanine, thereby effecting transcription repression. The sequence is that of HTH-type transcriptional repressor PurR from Salmonella paratyphi A (strain ATCC 9150 / SARB42).